Here is a 198-residue protein sequence, read N- to C-terminus: Transcription factor FapR (198 aa).

Residues 102–167 (TRIARGHHLF…HGRTIVEVNS (66 aa)) enclose the MaoC-like domain.

Belongs to the FapR family.

Its function is as follows. Transcriptional factor involved in regulation of membrane lipid biosynthesis by repressing genes involved in fatty acid and phospholipid metabolism. In Geobacillus kaustophilus (strain HTA426), this protein is Transcription factor FapR.